The primary structure comprises 361 residues: MAGNTIGQLFRVTTFGESHGLALGCIVDGVPPGIPLTEADLQHDLDRRRPGTSRYTTQRREPDQVKILSGVFEGVTTGTSIGLLIENTDQRSQDYSAIKDVFRPGHADYTYEQKYGLRDYRGGGRSSARETAMRVAAGAIAKKYLAEKFGIEIRGCLTQMGDIPLDIKDWSQVEQNPFFCPDPDKIDALDELMRALKKEGDSIGAKVTVVASGVPAGLGEPVFDRLDADIAHALMSINAVKGVEIGDGFDVVALRGSQNRDEITKDGFQSNHAGGILGGISSGQQIIAHMALKPTSSITVPGRTINRFGEEVEMITKGRHDPCVGIRAVPIAEAMLAIVLMDHLLRQRAQNADVKTDIPRW.

2 residues coordinate NADP(+): arginine 48 and arginine 54. FMN contacts are provided by residues 125–127 (RSS), 238–239 (NA), glycine 278, 293–297 (KPTSS), and arginine 319.

This sequence belongs to the chorismate synthase family. Homotetramer. It depends on FMNH2 as a cofactor.

The catalysed reaction is 5-O-(1-carboxyvinyl)-3-phosphoshikimate = chorismate + phosphate. It participates in metabolic intermediate biosynthesis; chorismate biosynthesis; chorismate from D-erythrose 4-phosphate and phosphoenolpyruvate: step 7/7. In terms of biological role, catalyzes the anti-1,4-elimination of the C-3 phosphate and the C-6 proR hydrogen from 5-enolpyruvylshikimate-3-phosphate (EPSP) to yield chorismate, which is the branch point compound that serves as the starting substrate for the three terminal pathways of aromatic amino acid biosynthesis. This reaction introduces a second double bond into the aromatic ring system. In Escherichia coli (strain K12 / MC4100 / BW2952), this protein is Chorismate synthase.